We begin with the raw amino-acid sequence, 197 residues long: Ribosome maturation factor RimP (197 aa).

The protein belongs to the RimP family.

The protein localises to the cytoplasm. In terms of biological role, required for maturation of 30S ribosomal subunits. This Acidovorax ebreus (strain TPSY) (Diaphorobacter sp. (strain TPSY)) protein is Ribosome maturation factor RimP.